A 131-amino-acid polypeptide reads, in one-letter code: Large ribosomal subunit protein bL21 (131 aa).

Residues 106–116 (TIDDMPKKEAA) are compositionally biased toward basic and acidic residues. The segment at 106 to 131 (TIDDMPKKEAAPAKARRSTKKAAAAE) is disordered.

It belongs to the bacterial ribosomal protein bL21 family. In terms of assembly, part of the 50S ribosomal subunit. Contacts protein L20.

Its function is as follows. This protein binds to 23S rRNA in the presence of protein L20. The polypeptide is Large ribosomal subunit protein bL21 (Koribacter versatilis (strain Ellin345)).